Consider the following 267-residue polypeptide: 2-oxo-hept-4-ene-1,7-dioate hydratase (267 aa).

Glu-106, Glu-108, and Glu-139 together coordinate Mg(2+).

This sequence belongs to the hydratase/decarboxylase family. As to quaternary structure, homodecamer. It depends on Mg(2+) as a cofactor.

It carries out the reaction (4Z)-2-oxohept-4-enedioate + H2O = (4S)-4-hydroxy-2-oxoheptanedioate. The protein operates within aromatic compound metabolism; 4-hydroxyphenylacetate degradation; pyruvate and succinate semialdehyde from 4-hydroxyphenylacetate: step 6/7. Functionally, transforms 2-oxo-hept-4-ene-1,7-dioate (OHED) into 4-hydroxy-2-oxoheptanedioate, a step in the 4-hydroxyphenylacetic acid (4-HPA) degradation pathway. The polypeptide is 2-oxo-hept-4-ene-1,7-dioate hydratase (Escherichia coli).